A 149-amino-acid polypeptide reads, in one-letter code: Large ribosomal subunit protein bL9 (149 aa).

This sequence belongs to the bacterial ribosomal protein bL9 family.

In terms of biological role, binds to the 23S rRNA. The chain is Large ribosomal subunit protein bL9 from Aquifex aeolicus (strain VF5).